Consider the following 178-residue polypeptide: Thioredoxin F1, chloroplastic (178 aa).

The disordered stretch occupies residues 1–22; sequence MPLSLRLSPSPTALSPTTGGFG. A chloroplast-targeting transit peptide spans 1–57; it reads MPLSLRLSPSPTALSPTTGGFGPSRKQCRIPYSGVPTTKIGFCSLDSRKRGDSSVVR. Polar residues predominate over residues 7 to 18; sequence LSPSPTALSPTT. In terms of domain architecture, Thioredoxin spans 58–174; sequence CSLETVNVSV…LVAAIETARS (117 aa). Residues C99 and C102 each act as nucleophile in the active site. C99 and C102 are disulfide-bonded. C126 carries the S-glutathionyl cysteine; transient modification.

It belongs to the thioredoxin family. Plant F-type subfamily. Glutathionylation at Cys-126 decreases its ability to be reduced by ferredoxin-thioredoxin reductase and reduces its efficiency in activating target chloroplastic enzymes.

Its subcellular location is the plastid. It is found in the chloroplast stroma. In terms of biological role, thiol-disulfide oxidoreductase involved in the redox regulation of enzymes of both reductive pentose phosphate pathway (Calvin-Benson cycle) and oxidative pentose phosphate pathway. Under light or reducing conditions, activates in chloroplast the glyceraldehyde-3-phosphate dehydrogenase, the phosphoribulokinase and the fructose-1,6-bisphosphate phosphatase, and inhibits the glucose-6-phosphate dehydrogenase. The sequence is that of Thioredoxin F1, chloroplastic from Arabidopsis thaliana (Mouse-ear cress).